Here is a 473-residue protein sequence, read N- to C-terminus: Ras-GEF domain-containing family member 1B (473 aa).

The N-terminal Ras-GEF domain occupies 34 to 161; sequence HDNNLLSGSL…NVQQMMQCLI (128 aa). Positions 205 to 453 constitute a Ras-GEF domain; sequence DPYTLAQQLT…YLASYESEGP (249 aa).

In terms of assembly, interacts with CCDC124 during cytokinesis. Interacts with Ras family proteins. In terms of tissue distribution, constitutively expressed in brain, intestine and testis. Low constitutive expression, if any, in heart, lung, lymph nodes and thymus. Up-regulated in heart, kidney, liver, lymph nodes, spleen and thymus at day 20 after infection with Trypanosoma cruzi. Not detected in muscle.

It is found in the early endosome. The protein localises to the late endosome. Its subcellular location is the midbody. Functionally, guanine nucleotide exchange factor (GEF) with specificity for RAP2A, it doesn't seems to activate other Ras family proteins (in vitro). This is Ras-GEF domain-containing family member 1B (Rasgef1b) from Mus musculus (Mouse).